We begin with the raw amino-acid sequence, 740 residues long: Ion-translocating oxidoreductase complex subunit C (740 aa).

4Fe-4S ferredoxin-type domains follow at residues 369-397 (GEPQEEQSCIRCSACADACPADLLPQQLY) and 407-436 (KATTHNIADCIECGACAWVCPSNIPLVQYF). [4Fe-4S] cluster contacts are provided by Cys-377, Cys-380, Cys-383, Cys-387, Cys-416, Cys-419, Cys-422, and Cys-426. Disordered stretches follow at residues 571–590 (LEQQQANAEPEQQVDPRKAA) and 602–716 (KLEQ…DPRK). Low complexity-rich tracts occupy residues 573–583 (QQQANAEPEQQ) and 637–647 (QQQANAEPEQQ).

It belongs to the 4Fe4S bacterial-type ferredoxin family. RnfC subfamily. The complex is composed of six subunits: RsxA, RsxB, RsxC, RsxD, RsxE and RsxG. [4Fe-4S] cluster serves as cofactor.

The protein resides in the cell inner membrane. Functionally, part of a membrane-bound complex that couples electron transfer with translocation of ions across the membrane. Required to maintain the reduced state of SoxR. Probably transfers electron from NAD(P)H to SoxR. This is Ion-translocating oxidoreductase complex subunit C from Escherichia coli (strain K12).